A 157-amino-acid chain; its full sequence is Phosphopantetheine adenylyltransferase (157 aa).

Position 8 (T8) interacts with substrate. ATP contacts are provided by residues 8-9 (TF) and H16. Substrate contacts are provided by K40, T72, and R86. ATP-binding positions include 87-89 (GLR), E97, and 122-128 (YSFLSSS).

Belongs to the bacterial CoaD family. Homohexamer. The cofactor is Mg(2+).

Its subcellular location is the cytoplasm. It catalyses the reaction (R)-4'-phosphopantetheine + ATP + H(+) = 3'-dephospho-CoA + diphosphate. It participates in cofactor biosynthesis; coenzyme A biosynthesis; CoA from (R)-pantothenate: step 4/5. Reversibly transfers an adenylyl group from ATP to 4'-phosphopantetheine, yielding dephospho-CoA (dPCoA) and pyrophosphate. This Prochlorococcus marinus (strain MIT 9312) protein is Phosphopantetheine adenylyltransferase.